Here is an 839-residue protein sequence, read N- to C-terminus: V-type proton ATPase 116 kDa subunit a 1 (839 aa).

The Cytoplasmic segment spans residues 1 to 395 (MGELFRSEEM…DAYGIGTYRE (395 aa)). Thr-257 and Thr-367 each carry phosphothreonine. Position 371 is a phosphotyrosine (Tyr-371). Residues 396–414 (INPAPYTVITFPFLFAVMF) form a helical membrane-spanning segment. Topologically, residues 415–416 (GD) are vacuolar. Residues 417–433 (FGHGILMTLFAVWMVLR) form a helical membrane-spanning segment. Residues 434 to 448 (ESRILSQKHENEMFS) lie on the Cytoplasmic side of the membrane. The chain crosses the membrane as a helical span at residues 449–478 (MVFSGRYIILLMGLFSIYTGLIYNDCFSKS). Over 479–542 (LNIFGSSWSV…ATNKLTFLNS (64 aa)) the chain is Vacuolar. Residues 543–562 (FKMKMSVILGIIHMLFGVSL) form a helical membrane-spanning segment. At 563-580 (SLFNHIYFKKPLNIYFGF) the chain is on the cytoplasmic side. The chain crosses the membrane as a helical span at residues 581-601 (IPEIIFMSSLFGYLVILIFYK). Residues 602–646 (WTAYDAHSSRNAPSLLIHFINMFLFSYPESGNAMLYSGQKGIQCF) are Vacuolar-facing. A helical transmembrane segment spans residues 647–666 (LIVVAMLCVPWMLLFKPLIL). Topologically, residues 667 to 726 (RHQYLRKKHLGTLNFGGIRVGNGPTEEDAEIIQHDQLSTHSEDAEEFDFGDTMVHQAIHT) are cytoplasmic. Residues 727 to 751 (IEYCLGCISNTASYLRLWALSLAHA) traverse the membrane as a helical segment. Topologically, residues 752 to 772 (QLSEVLWTMVIHIGLHVRSLA) are vacuolar. Residues 773–811 (GGLGLFFIFAAFATLTVAILLIMEGLSAFLHALRLHWVE) traverse the membrane as a helical segment. Residues 812–839 (FQNKFYTGTGFKFLPFSFEHIREGKFDE) lie on the Cytoplasmic side of the membrane.

Belongs to the V-ATPase 116 kDa subunit family. As to quaternary structure, V-ATPase is a heteromultimeric enzyme made up of two complexes: the ATP-hydrolytic V1 complex and the proton translocation V0 complex. The V1 complex consists of three catalytic AB heterodimers that form a heterohexamer, three peripheral stalks each consisting of EG heterodimers, one central rotor including subunits D and F, and the regulatory subunits C and H. The proton translocation complex V0 consists of the proton transport subunit a, a ring of proteolipid subunits c9c'', rotary subunit d, subunits e and f, and the accessory subunits ATP6AP1/Ac45 and ATP6AP2/PRR. Interacts with SPAAR. Predominantly expressed in neurons in the cortex and in the dentate gyrus, CA1 and CA3 regions of the hippocampus (at protein level). Expressed at lower levels in astrocytes, oligodendrocytes and microglia (at protein level). In the cerebellum, present in Purkinje and granule cells (at protein level).

The protein localises to the cytoplasmic vesicle. The protein resides in the clathrin-coated vesicle membrane. It localises to the secretory vesicle. Its subcellular location is the synaptic vesicle membrane. It is found in the melanosome. In terms of biological role, subunit of the V0 complex of vacuolar(H+)-ATPase (V-ATPase), a multisubunit enzyme composed of a peripheral complex (V1) that hydrolyzes ATP and a membrane integral complex (V0) that translocates protons. V-ATPase is responsible for the acidification of various organelles, such as lysosomes, endosomes, the trans-Golgi network, and secretory granules, including synaptic vesicles. In certain cell types, can be exported to the plasma membrane, where it is involved in the acidification of the extracellular environment. Required for assembly and activity of the vacuolar ATPase. Through its action on compartment acidification, plays an essential role in neuronal development in terms of integrity and connectivity of neurons. The chain is V-type proton ATPase 116 kDa subunit a 1 (Atp6v0a1) from Mus musculus (Mouse).